A 577-amino-acid chain; its full sequence is Beta-fructofuranosidase, insoluble isoenzyme 1 (577 aa).

The signal sequence occupies residues 1–22 (MGTRLLALAPWLLLLLLQLAGA). The active site involves aspartate 63. 3 N-linked (GlcNAc...) asparagine glycosylation sites follow: asparagine 158, asparagine 183, and asparagine 333.

This sequence belongs to the glycosyl hydrolase 32 family.

The protein resides in the secreted. Its subcellular location is the extracellular space. It localises to the apoplast. It is found in the cell wall. It catalyses the reaction Hydrolysis of terminal non-reducing beta-D-fructofuranoside residues in beta-D-fructofuranosides.. Functionally, may play a role in sucrose partitioning during seed development and in stress response. The chain is Beta-fructofuranosidase, insoluble isoenzyme 1 (CIN1) from Oryza sativa subsp. indica (Rice).